We begin with the raw amino-acid sequence, 408 residues long: Argininosuccinate synthase (408 aa).

Residues Ala9–Ser17 and Ala36 contribute to the ATP site. The L-citrulline site is built by Tyr87 and Ser92. An ATP-binding site is contributed by Gly117. Positions 119, 123, and 124 each coordinate L-aspartate. Residue Asn123 participates in L-citrulline binding. The L-citrulline site is built by Arg127, Ser176, Ser185, Glu261, and Tyr273.

This sequence belongs to the argininosuccinate synthase family. Type 1 subfamily. Homotetramer.

It is found in the cytoplasm. It catalyses the reaction L-citrulline + L-aspartate + ATP = 2-(N(omega)-L-arginino)succinate + AMP + diphosphate + H(+). It functions in the pathway amino-acid biosynthesis; L-arginine biosynthesis; L-arginine from L-ornithine and carbamoyl phosphate: step 2/3. The sequence is that of Argininosuccinate synthase from Deinococcus deserti (strain DSM 17065 / CIP 109153 / LMG 22923 / VCD115).